We begin with the raw amino-acid sequence, 321 residues long: Flagellin C (321 aa).

It belongs to the bacterial flagellin family.

It is found in the secreted. The protein resides in the bacterial flagellum. Functionally, flagellin is the subunit protein which polymerizes to form the filaments of bacterial flagella. This chain is Flagellin C (flaC), found in Rhizobium meliloti (strain 1021) (Ensifer meliloti).